The chain runs to 508 residues: Cell death protein 3 (508 aa).

Residues M1–D223 constitute a propeptide that is removed on maturation. Positions M2–L91 constitute a CARD domain. Disordered regions lie at residues P106–H130 and Y148–N184. Positions L118–T127 are enriched in polar residues. Low complexity predominate over residues S171 to N184. Active-site residues include H317 and C360. The interval G392 to Q407 is required for interaction with ced-4.

Belongs to the peptidase C14A family. The active form is probably a heterodimer of the p17 subunit with either the p15 or p13 subunit which are all derived from the precursor by autocatalysis. Interacts with octameric ced-4 (two ced-3 zymogens per one ced-4 octamer); the interaction causes the autoproteolytic cleavage and activation of ced-3. Processed ced-3 also interacts with ced-4 octamer to form a stable holoenzyme. Interacts (via large subunit p17) with csp-3; the interaction prevents ced-3 autoactivation and delays ced-4-induced ced-3 processing. Interacts (via large subunit p17 or small subunit p13 or p15) with csp-2; the interaction inhibits ced-3 autoactivation. Interacts (via propeptide) with nucleoporin npp-14; the interaction tethers ced-3 to the nuclear membrane and prevents its autoprocessing in absence of ced-4. Interacts with dct-1. May form a complex composed of ced-3, ced-4 and mac-1. In terms of processing, autocatalytic cleavage removes the propeptide and generates the catalytic subunit p17 and two non-catalytic subunits p15 and p13; autoproteolysis is induced by ced-4 oligomer. Cleaved by caspase csp-1 probably at Asp-146 and Asp-376.

It localises to the nucleus membrane. The protein resides in the perikaryon. The protein localises to the synapse. Its subcellular location is the mitochondrion. It is found in the cytoplasm. It localises to the perinuclear region. The catalysed reaction is Strict requirement for an Asp residue at position P1 and has a preferred cleavage sequence of Asp-Glu-Val-Asp-|-.. Its activity is regulated as follows. Octameric ced-4 activates zymogen autoprocessing and enhances activity of processed ced-3. Zymogen autoactivation is inhibited by csp-3. csp-3 has no effect on active ced-3. Zymogen autoactivation is inhibited by csp-2. Inhibited by cysteine protease inhibitor iodoacetic acid (CH3COOI). Inhibited by benzyloxycarbonyl-DEVD-fluoro-methyl ketone (zDEVD-fmk). Inhibited by benzyloxycarbonyl-VAD-fluoro-methyl ketone (zVAD-fmk). Not inhibited by N-[N-(L-3-transcarboxirane-2-carbonyl)-leucyl]-agmatine (E-64) or by the serine and cysteine protease inhibitor L-1-chloro-3-[4-to-osylamido]-7-amino-2-heptanone (TLCK). Its function is as follows. Acts as a cysteine protease in controlling programmed cell death (apoptosis) by proteolytically activating or inactivating a wide range of substrates. Component of the egl-1, ced-9, ced-4 and ced-3 apoptotic signaling cascade required for the initiation of programmed cell death in cells fated to die during embryonic and postembryonic development. During oogenesis, required for germline apoptosis downstream of ced-9 and ced-4 but independently of egl-1. By cleaving and activating ced-8, promotes phosphatidylserine exposure on the surface of apoptotic cells; phosphatidylserine is a specific marker only present at the surface of apoptotic cells and acts as a specific signal for engulfment. By cleaving and converting dcr-1 into a deoxyribonuclease (DNase), promotes apoptotic chromosomal DNA fragmentation. By cleaving mitochondrial fission protein drp-1, may regulate the removal of mitochondria during apoptosis. During germline apoptosis, cleaves translation initiation factor ifg-1 (isoform p170) promoting cap-independent translation. During male tail morphogenesis, promotes apoptosis of the tail-spike cell downstream of ced-4 but independently of egl-1 and ced-9. By cleaving cnt-1, prevents the activation of the prosurvival akt-1/2 signaling pathway and thus promotes apoptosis. Downstream of ced-4, may play a role in sex-specific cell apoptosis by cleaving sex-determining protein fem-1. May regulate germline apoptosis in response to DNA damage, probably downstream of let-60/ras and mpk-1 pathway. Cleaves ced-9 in vitro. Cleaves csp-2 isoform b resulting in the removal of the propeptide and the generation of csp-2 subunit p31 in vitro. Independently of its apoptotic role has additional functions. Probably by cleaving and thereby activating actin-severing protein gsnl-1, required for the elimination of transient presynaptic components during larval development downstream of egl-1, ced-9 and ced-4 pathway. Together with ain-1, a component of the miRNA-induced-silencing complex (miRISC), regulates temporal cell fate patterning during larval development. Acts in cell fate patterning by cleaving heterochronic protein lin-28, likely promoting its degradation. Also cleaves heterochronic protein lin-14 and exonuclease disl-2 in vitro. Downstream of calreticulin crt-1 and ced-4 and independently of egl-1 and ced-9, plays a role in the initial steps of axonal regrowth following axotomy. Cleaves 14-3-3-like protein ftt-2, tubulin tbb-2 and calreticulin crt-1 in vitro. Plays also a role in resistance to S.typhimurium-mediated infection. The polypeptide is Cell death protein 3 (Caenorhabditis remanei (Caenorhabditis vulgaris)).